Here is a 214-residue protein sequence, read N- to C-terminus: Thymidylate kinase (214 aa).

11–18 (GPEGAGKT) contributes to the ATP binding site.

This sequence belongs to the thymidylate kinase family.

The catalysed reaction is dTMP + ATP = dTDP + ADP. Functionally, phosphorylation of dTMP to form dTDP in both de novo and salvage pathways of dTTP synthesis. In Leuconostoc citreum (strain KM20), this protein is Thymidylate kinase.